Reading from the N-terminus, the 336-residue chain is Phosphate acyltransferase (336 aa).

It belongs to the PlsX family. As to quaternary structure, homodimer. Probably interacts with PlsY.

The protein resides in the cytoplasm. It carries out the reaction a fatty acyl-[ACP] + phosphate = an acyl phosphate + holo-[ACP]. It participates in lipid metabolism; phospholipid metabolism. In terms of biological role, catalyzes the reversible formation of acyl-phosphate (acyl-PO(4)) from acyl-[acyl-carrier-protein] (acyl-ACP). This enzyme utilizes acyl-ACP as fatty acyl donor, but not acyl-CoA. In Pseudomonas fluorescens (strain ATCC BAA-477 / NRRL B-23932 / Pf-5), this protein is Phosphate acyltransferase.